The primary structure comprises 388 residues: Lipid-A-disaccharide synthase (388 aa).

The protein belongs to the LpxB family.

The catalysed reaction is a lipid X + a UDP-2-N,3-O-bis[(3R)-3-hydroxyacyl]-alpha-D-glucosamine = a lipid A disaccharide + UDP + H(+). Its pathway is bacterial outer membrane biogenesis; LPS lipid A biosynthesis. Functionally, condensation of UDP-2,3-diacylglucosamine and 2,3-diacylglucosamine-1-phosphate to form lipid A disaccharide, a precursor of lipid A, a phosphorylated glycolipid that anchors the lipopolysaccharide to the outer membrane of the cell. The chain is Lipid-A-disaccharide synthase from Sulfurihydrogenibium sp. (strain YO3AOP1).